Consider the following 304-residue polypeptide: Malate dehydrogenase (304 aa).

NAD(+) is bound by residues 8–14 and Asp-34; that span reads GAAGTVG. Residues Arg-83 and Arg-89 each contribute to the substrate site. NAD(+)-binding positions include Asn-96 and 119–121; that span reads TSN. Residues Asn-121 and Arg-152 each coordinate substrate. The Proton acceptor role is filled by His-176.

The protein belongs to the LDH/MDH superfamily.

The catalysed reaction is (S)-malate + NAD(+) = oxaloacetate + NADH + H(+). Its function is as follows. Catalyzes the reversible oxidation of malate to oxaloacetate. The polypeptide is Malate dehydrogenase (mdh) (Natronomonas pharaonis (strain ATCC 35678 / DSM 2160 / CIP 103997 / JCM 8858 / NBRC 14720 / NCIMB 2260 / Gabara) (Halobacterium pharaonis)).